A 334-amino-acid chain; its full sequence is Succinate receptor 1 (334 aa).

The Extracellular segment spans residues 5-31 (MAWNATCKNWLAAEAALEKYYLSIFYG). N-linked (GlcNAc...) asparagine glycosylation is present at Asn-8. The chain crosses the membrane as a helical span at residues 32 to 52 (IEFVVGVLGNTIVVYGYIFSL). The Cytoplasmic portion of the chain corresponds to 53 to 59 (KNWNSSN). The chain crosses the membrane as a helical span at residues 60–80 (IYLFNLSVSDLAFLCTLPMLI). Topologically, residues 81–103 (RSYANGNWIYGDVLCISNRYVLH) are extracellular. Residues Cys-95 and Cys-172 are joined by a disulfide bond. The chain crosses the membrane as a helical span at residues 104 to 124 (ANLYTSILFLTFISIDRYLII). The Cytoplasmic segment spans residues 125-137 (KYPFREHLLQKKE). The helical transmembrane segment at 138–158 (FAILISLAIWVLVTLELLPIL) threads the bilayer. Residues 159-185 (PLINPVITDNGTTCNDFASSGDPNYNL) lie on the Extracellular side of the membrane. Asn-168 carries N-linked (GlcNAc...) asparagine glycosylation. The helical transmembrane segment at 186 to 206 (IYSMCLTLLGFLIPLFVMCFF) threads the bilayer. At 207 to 230 (YYKIALFLKQRNRQVATALPLEKP) the chain is on the cytoplasmic side. A helical transmembrane segment spans residues 231–251 (LNLVIMAVVIFSVLFTPYHVM). Over 252–281 (RNVRIASRLGSWKQYQCTQVVINSFYIVTR) the chain is Extracellular. The chain crosses the membrane as a helical span at residues 282–302 (PLAFLNSVINPVFYFLLGDHF). Residues 303–334 (RDMLMNQLRHNFKSLTSFSRWAHELLLSFREK) are Cytoplasmic-facing.

The protein belongs to the G-protein coupled receptor 1 family. As to expression, expressed specifically in kidney. Highly expressed in immature dendritic cells, expression rapidly downregulates after maturation. Also expressed in macrophages.

It is found in the cell membrane. Functionally, g protein-coupled receptor for succinate able to mediate signaling through Gq/GNAQ or Gi/GNAI second messengers depending on the cell type and the processes regulated. Succinate-SUCNR1 signaling serves as a link between metabolic stress, inflammation and energy homeostasis. In macrophages, plays a range of immune-regulatory roles. During inflammation, succinate-SUCNR1 signaling may act as an anti-inflammatory mediator or boost inflammation depending on the inflammatory status of cells. Hyperpolarizes M2 macrophages versus M1 phenotype through Gq signaling by regulating the transcription of genes involved in immune function. In activated M1 macrophages, plays a pro-inflammatory role in response to LPS. Expressed in dendritic cells, where it is involved in the sensing of immunological danger and enhances immunity. Mediates succinate triggered intracelleular calcium mobilization, induces migratory responses and acts in synergy with Toll-like receptor ligands for the production of proinflammatory cytokines as well as an enhancement of antigen-specific activation of helper T cells. In the small intestine, mediates the activation of tuft cells by dietary succinate and triggers type 2 immunity. In adipocytes, plays an important role in the control of energy metabolism. In response to succinate, controls leptin expression in an AMPK-JNK-CEBPA-dependent as well as circadian clock-regulated manner. In muscle tissue, is expressed in non-muscle cells and coordinates muscle remodeling in response to the succinate produced during exercise training in a paracrine manner. In retina, acts as a mediator of vessel growth during retinal development. In response to succinate, regulates the production of angiogenic factors, including VEGF, by retinal ganglion neurons. The chain is Succinate receptor 1 from Homo sapiens (Human).